The chain runs to 475 residues: tRNA-2-methylthio-N(6)-dimethylallyladenosine synthase (475 aa).

In terms of domain architecture, MTTase N-terminal spans 3–120 (KKLHIKTWGC…LPEMIDQIKD (118 aa)). Residues Cys-12, Cys-49, Cys-83, Cys-157, Cys-161, and Cys-164 each coordinate [4Fe-4S] cluster. Residues 143 to 375 (RAEGPSAFVS…QDRITQQAMR (233 aa)) form the Radical SAM core domain. A TRAM domain is found at 378–441 (RQMVGTVQRI…TNSLRGVFIR (64 aa)).

The protein belongs to the methylthiotransferase family. MiaB subfamily. In terms of assembly, monomer. The cofactor is [4Fe-4S] cluster.

It is found in the cytoplasm. The enzyme catalyses N(6)-dimethylallyladenosine(37) in tRNA + (sulfur carrier)-SH + AH2 + 2 S-adenosyl-L-methionine = 2-methylsulfanyl-N(6)-dimethylallyladenosine(37) in tRNA + (sulfur carrier)-H + 5'-deoxyadenosine + L-methionine + A + S-adenosyl-L-homocysteine + 2 H(+). Its function is as follows. Catalyzes the methylthiolation of N6-(dimethylallyl)adenosine (i(6)A), leading to the formation of 2-methylthio-N6-(dimethylallyl)adenosine (ms(2)i(6)A) at position 37 in tRNAs that read codons beginning with uridine. This is tRNA-2-methylthio-N(6)-dimethylallyladenosine synthase from Shewanella pealeana (strain ATCC 700345 / ANG-SQ1).